The primary structure comprises 387 residues: tRNA-specific 2-thiouridylase MnmA (387 aa).

ATP contacts are provided by residues 34 to 41 (AMSGGVDS) and methionine 60. The active-site Nucleophile is the cysteine 127. Cysteine 127 and cysteine 223 are joined by a disulfide. Glycine 151 is a binding site for ATP. Positions 173-175 (KDQ) are interaction with tRNA. Cysteine 223 acts as the Cysteine persulfide intermediate in catalysis.

The protein belongs to the MnmA/TRMU family.

Its subcellular location is the cytoplasm. It carries out the reaction S-sulfanyl-L-cysteinyl-[protein] + uridine(34) in tRNA + AH2 + ATP = 2-thiouridine(34) in tRNA + L-cysteinyl-[protein] + A + AMP + diphosphate + H(+). Its function is as follows. Catalyzes the 2-thiolation of uridine at the wobble position (U34) of tRNA, leading to the formation of s(2)U34. The protein is tRNA-specific 2-thiouridylase MnmA of Anaplasma marginale (strain St. Maries).